A 95-amino-acid polypeptide reads, in one-letter code: SMAD5 antisense gene protein 1 (95 aa).

2 disordered regions span residues 1-24 (MHKQ…SSWS) and 43-70 (SSPT…KPAN). Residues 7-19 (LLPPPATPPPPPQ) show a composition bias toward pro residues.

In terms of tissue distribution, expressed in fetal tissues.

This chain is SMAD5 antisense gene protein 1 (SMAD5-AS1), found in Homo sapiens (Human).